The sequence spans 101 residues: Protein S100-A4 (101 aa).

Ala2 carries the N-acetylalanine modification. 2 consecutive EF-hand domains span residues 12–47 (IVST…SFLG) and 50–85 (TDEA…IAMM). Ca(2+) is bound by residues Lys28 and Glu33. At Lys35 the chain carries N6-acetyllysine. 5 residues coordinate Ca(2+): Asp63, Asn65, Asp67, Glu69, and Glu74.

It belongs to the S-100 family. Homodimer. Interacts with PPFIBP1 in a calcium-dependent mode. Interacts with PGLYRP1; this complex acts as a chemoattractant that promotes lymphocyte movement. Interacts with MYH9; this interaction increases cell motility. Interacts with Annexin 2/ANXA2. Interacts with TP53; this interaction promotes TP53 degradation. Interacts with CCR5 and CXCR3. Interacts with FCGR3A; this interaction inhibits PKC-dependent phosphorylation of FCGR3A.

Its subcellular location is the secreted. It is found in the nucleus. The protein resides in the cytoplasm. In terms of biological role, calcium-binding protein that plays a role in various cellular processes including motility, angiogenesis, cell differentiation, apoptosis, and autophagy. Increases cell motility and invasiveness by interacting with non-muscle myosin heavy chain (NMMHC) IIA/MYH9. Mechanistically, promotes filament depolymerization and increases the amount of soluble myosin-IIA, resulting in the formation of stable protrusions facilitating chemotaxis. Also modulates the pro-apoptotic function of TP53 by binding to its C-terminal transactivation domain within the nucleus and reducing its protein levels. Within the extracellular space, stimulates cytokine production including granulocyte colony-stimulating factor and CCL24 from T-lymphocytes. In addition, stimulates T-lymphocyte chemotaxis by acting as a chemoattractant complex with PGLYRP1 that promotes lymphocyte migration via CCR5 and CXCR3 receptors. In Rattus norvegicus (Rat), this protein is Protein S100-A4 (S100a4).